Consider the following 235-residue polypeptide: Small ribosomal subunit protein eS4 (235 aa).

One can recognise an S4 RNA-binding domain in the interval 37-100 (LPLGIIIRDI…NEAYRMLQDE (64 aa)).

It belongs to the eukaryotic ribosomal protein eS4 family.

The protein is Small ribosomal subunit protein eS4 of Methanosarcina acetivorans (strain ATCC 35395 / DSM 2834 / JCM 12185 / C2A).